A 96-amino-acid polypeptide reads, in one-letter code: Large ribosomal subunit protein uL23 (96 aa).

Belongs to the universal ribosomal protein uL23 family. In terms of assembly, part of the 50S ribosomal subunit. Contacts protein L29, and trigger factor when it is bound to the ribosome.

Its function is as follows. One of the early assembly proteins it binds 23S rRNA. One of the proteins that surrounds the polypeptide exit tunnel on the outside of the ribosome. Forms the main docking site for trigger factor binding to the ribosome. This is Large ribosomal subunit protein uL23 from Nitratidesulfovibrio vulgaris (strain ATCC 29579 / DSM 644 / CCUG 34227 / NCIMB 8303 / VKM B-1760 / Hildenborough) (Desulfovibrio vulgaris).